The primary structure comprises 262 residues: Trypsin eta (262 aa).

Residues 1–22 (MNKVILRILAVLFLLGIYAVSA) form the signal peptide. The propeptide at 23–27 (QSDGR) is activation peptide. A Peptidase S1 domain is found at 28–259 (IVGGADTSSY…YKDWIAKQRT (232 aa)). Residues Cys-59 and Cys-75 are joined by a disulfide bond. Active-site charge relay system residues include His-74 and Asp-120. 2 cysteine pairs are disulfide-bonded: Cys-185–Cys-200 and Cys-211–Cys-235. Catalysis depends on Ser-215, which acts as the Charge relay system.

Belongs to the peptidase S1 family.

It is found in the secreted. The protein resides in the extracellular space. The catalysed reaction is Preferential cleavage: Arg-|-Xaa, Lys-|-Xaa.. The polypeptide is Trypsin eta (etaTry) (Drosophila melanogaster (Fruit fly)).